Reading from the N-terminus, the 145-residue chain is 3-hydroxyacyl-[acyl-carrier-protein] dehydratase FabZ (145 aa).

His47 is a catalytic residue.

This sequence belongs to the thioester dehydratase family. FabZ subfamily.

It localises to the cytoplasm. The catalysed reaction is a (3R)-hydroxyacyl-[ACP] = a (2E)-enoyl-[ACP] + H2O. In terms of biological role, involved in unsaturated fatty acids biosynthesis. Catalyzes the dehydration of short chain beta-hydroxyacyl-ACPs and long chain saturated and unsaturated beta-hydroxyacyl-ACPs. In Methylobacillus flagellatus (strain ATCC 51484 / DSM 6875 / VKM B-1610 / KT), this protein is 3-hydroxyacyl-[acyl-carrier-protein] dehydratase FabZ.